The primary structure comprises 242 residues: Probable ergothioneine transport ATP-binding protein EgtUA (242 aa).

Positions 2–236 (IEYKNVALRY…PATDFVADLF (235 aa)) constitute an ABC transporter domain. 34–41 (GPSGSGKT) is an ATP binding site.

It belongs to the ABC transporter superfamily. In terms of assembly, the complex is probably composed of at least an ATP-binding protein (EgtUA) and a transmembrane protein (EgtUBC).

It is found in the cell inner membrane. The catalysed reaction is ergothioneine(out) + ATP + H2O = ergothioneine(in) + ADP + phosphate + H(+). In terms of biological role, part of an ABC transporter complex EgtU required for the uptake of ergothioneine (EGT), a natural low-molecular weight (LMW) thiol antioxidant. Probably responsible for energy coupling to the transport system. The chain is Probable ergothioneine transport ATP-binding protein EgtUA from Streptococcus pneumoniae serotype 2 (strain D39 / NCTC 7466).